The following is a 393-amino-acid chain: Cholinephosphotransferase 1 (393 aa).

Residues 1–40 (MGFFIPQSSLGNLKLYKYQSDDRSFLSNHVLRPFWRKFAT) are Lumenal-facing. A helical transmembrane segment spans residues 41 to 61 (IFPLWMAPNLVTLLGFCFIIF). Residues 62–172 (NVLTTLYYDP…YHTHKLYLAE (111 aa)) are Cytoplasmic-facing. Residues 173–193 (FCGPVEGIIVLCISFIAVGIY) form a helical membrane-spanning segment. Topologically, residues 194 to 210 (GPQTIWHTKVAQFSWQD) are lumenal. The helical transmembrane segment at 211 to 231 (FVFDVETVHLMYAFCTGALIF) threads the bilayer. The Cytoplasmic segment spans residues 232–263 (NIVTAHTNVVRYYESQSTKSATPSKTAENISK). A helical transmembrane segment spans residues 264-284 (AVNGLLPFFAYFSSIFTLVLI). Position 285 (glutamine 285) is a topological domain, lumenal. The helical transmembrane segment at 286-306 (PSFISLALILSIGFSVAFVVG) threads the bilayer. Topologically, residues 307-320 (RMIIAHLTMQPFPM) are cytoplasmic. The chain crosses the membrane as a helical span at residues 321–341 (VNFPFLIPTIQLVLYAFMVYV). The Lumenal segment spans residues 342-348 (LDYQKGS). Residues 349–369 (IVSALVWMGLGLTLAIHGMFI) form a helical membrane-spanning segment. Residues 370-393 (NDIIYDITTFLDIYALSIKHPKEI) lie on the Cytoplasmic side of the membrane.

This sequence belongs to the CDP-alcohol phosphatidyltransferase class-I family. It depends on Mg(2+) as a cofactor.

The protein localises to the microsome membrane. It is found in the endoplasmic reticulum membrane. It localises to the mitochondrion outer membrane. The enzyme catalyses CDP-choline + a 1,2-diacyl-sn-glycerol = a 1,2-diacyl-sn-glycero-3-phosphocholine + CMP + H(+). The catalysed reaction is CDP-N,N-dimethylethanolamine + a 1,2-diacyl-sn-glycerol = a 1,2-diacyl-sn-glycero-3-phospho-N,N-dimethylethanolamine + CMP + H(+). It functions in the pathway phospholipid metabolism; phosphatidylcholine biosynthesis; phosphatidylcholine from phosphocholine: step 2/2. With respect to regulation, requires a divalent cation activator, and is inhibited by CMP. Activated by phospholipids, especially phosphatidylcholine. Functionally, catalyzes the final step in the CDP-choline route leading to phosphatidylcholin (PC). Preferentially uses CDP-monomethylethanolamine as aminoalcohol substrate. Shows highest activity toward di- and mono-unsaturated diacylglycerol species as lipid substrates. The CDP-choline pathway only contributes to net PC synthesis if exogenous choline is present. In its absence, this pathway recycles choline from PC turnover and may contribute to maintaining the proper PC species composition. The polypeptide is Cholinephosphotransferase 1 (CPT1) (Saccharomyces cerevisiae (strain ATCC 204508 / S288c) (Baker's yeast)).